The sequence spans 487 residues: MSLMILGTSSHVGKSVTVAAICRIMIRQGISVAPFKSQNMSLNSYVTRDGAEIGIAQAMQAFAARVLPSALMNPVLLKPKGDSTSQVVLLGHPYKDVQIRDYYQETDHLLEIAVDAYHQLVEEYGAVIVEGAGGAAEVNLYDRDIANIRLAEHLRLPIVLVADIERGGVFAQVYGTIALLPEQIRPLVKGIIINKFRGDPTLFESGVKTLEDLTGVPVLGVIPYTRLDLPSEDSLSLQDKERQTGLVRIAVIRLPQIANFTDFELLERHAAVDYLLPGESLDGYDCIIIPGTKNTVNDLLALQASGTAAAIRDARGQGVPVIGICGGYQMLGKTVIDDGSEARKGTYEGLGLLDLVTTFEGYDKTTVQVQRTAAPVPPILDAMGTVSGYEIHMGTTVLKSGRTAFAGEGAVSDDGLVFGTYLHGLFMVPAAAEALLSYLYSQRGLTFTGIEEQNEDPYDLLADHFEAHLQMERLLTLCSDHTPETPV.

In terms of domain architecture, GATase cobBQ-type spans 246 to 431; the sequence is LVRIAVIRLP…LHGLFMVPAA (186 aa). The active-site Nucleophile is the C325. The active site involves H423.

Belongs to the CobB/CobQ family. CobQ subfamily.

It functions in the pathway cofactor biosynthesis; adenosylcobalamin biosynthesis. Functionally, catalyzes amidations at positions B, D, E, and G on adenosylcobyrinic A,C-diamide. NH(2) groups are provided by glutamine, and one molecule of ATP is hydrogenolyzed for each amidation. This is Probable cobyric acid synthase from Methanosphaerula palustris (strain ATCC BAA-1556 / DSM 19958 / E1-9c).